Here is a 310-residue protein sequence, read N- to C-terminus: MKITVIGAGNVGATTAFRIADKKLARELVLLDVVEGIPQGKGLDMYETGPVGLFDTKITGSNDYADTADSDIVIITAGLPRKPGMTREDLLMKNAGIVKEVTDNIMKHSKNPIIIVVSNPLDIMTHVAWVRSGLPKERVIGMAGVLDAARFRSFIAMELGVSMQDINACVLGGHGDAMVPVVKYTTVAGIPISDLLPAETIDKLVERTRNGGAEIVEHLKQGSAFYSPGSSVVEMVESIVLDRKRVLPCAVGLEGQYGIDKTFVGVPVKLGRNGVEQIYEINLDQADLDLLQKSAKIVDENCKMLESTIG.

NAD(+)-binding positions include 7 to 12 (GAGNVG) and aspartate 32. Substrate is bound by residues arginine 81 and arginine 87. Residues asparagine 94 and 117–119 (VSN) each bind NAD(+). Asparagine 119 and arginine 150 together coordinate substrate. Catalysis depends on histidine 174, which acts as the Proton acceptor.

It belongs to the LDH/MDH superfamily. MDH type 3 family. In terms of assembly, homotetramer; arranged as a dimer of dimers.

It carries out the reaction (S)-malate + NAD(+) = oxaloacetate + NADH + H(+). Functionally, catalyzes the reversible oxidation of malate to oxaloacetate. The chain is Malate dehydrogenase from Prosthecochloris vibrioformis (Chlorobium vibrioforme).